Reading from the N-terminus, the 1123-residue chain is Alpha-mannosidase E (1123 aa).

The N-terminal stretch at 1–21 (MNKTKLIKIIFVIGVWILLST) is a signal peptide. 2 N-linked (GlcNAc...) asparagine glycosylation sites follow: Asn-2 and Asn-38. Over 22–1072 (FIINIYNENF…KYNRPNHLAL (1051 aa)) the chain is Extracellular. Residues His-67 and Asp-69 each coordinate Zn(2+). Asn-140 is a glycosylation site (N-linked (GlcNAc...) asparagine). Positions 150 and 409 each coordinate Zn(2+). Residue Asp-150 is the Nucleophile of the active site. 6 N-linked (GlcNAc...) asparagine glycosylation sites follow: Asn-521, Asn-675, Asn-858, Asn-887, Asn-975, and Asn-990. The helical transmembrane segment at 1073–1093 (ILSLSIGTPAGILIIVIALVV) threads the bilayer. At 1094-1123 (IYKKRKNRKTLTSSYSLLNLILKDRADSSP) the chain is on the cytoplasmic side.

Belongs to the glycosyl hydrolase 38 family. It depends on Zn(2+) as a cofactor.

The protein resides in the membrane. It catalyses the reaction Hydrolysis of terminal, non-reducing alpha-D-mannose residues in alpha-D-mannosides.. This chain is Alpha-mannosidase E (manE), found in Dictyostelium discoideum (Social amoeba).